We begin with the raw amino-acid sequence, 367 residues long: NADH-quinone oxidoreductase subunit H (367 aa).

The next 8 helical transmembrane spans lie at 19–39, 87–107, 132–152, 178–198, 204–224, 266–286, 291–311, and 328–348; these read ALFIKIIAVIISVMISVAYLV, ICFLIAPIITFTLALLGWAVI, IGVLYILAISSLGVYGIIIAG, IGLTIVTVLLATGSLKLGEIV, MPYWIDLLLLPMACIFFISAL, ILINAMAVIFFFGGWYPPLNI, IIPGIVWFVLKVVALLFCFIW, and GWKVFLPISLLWVVLVSSILV.

It belongs to the complex I subunit 1 family. As to quaternary structure, NDH-1 is composed of 14 different subunits. Subunits NuoA, H, J, K, L, M, N constitute the membrane sector of the complex.

It is found in the cell inner membrane. It catalyses the reaction a quinone + NADH + 5 H(+)(in) = a quinol + NAD(+) + 4 H(+)(out). In terms of biological role, NDH-1 shuttles electrons from NADH, via FMN and iron-sulfur (Fe-S) centers, to quinones in the respiratory chain. The immediate electron acceptor for the enzyme in this species is believed to be ubiquinone. Couples the redox reaction to proton translocation (for every two electrons transferred, four hydrogen ions are translocated across the cytoplasmic membrane), and thus conserves the redox energy in a proton gradient. This subunit may bind ubiquinone. The polypeptide is NADH-quinone oxidoreductase subunit H (Ehrlichia chaffeensis (strain ATCC CRL-10679 / Arkansas)).